Reading from the N-terminus, the 492-residue chain is FAD-linked oxidoreductase pgmH (492 aa).

Residues 54-224 (SIRLATLVVY…TEFKYRVHKQ (171 aa)) form the FAD-binding PCMH-type domain.

The protein belongs to the oxygen-dependent FAD-linked oxidoreductase family. It depends on FAD as a cofactor.

The protein operates within pigment biosynthesis. Its pathway is secondary metabolite biosynthesis. Functionally, FAD-linked oxidoreductase; part of the gene cluster that mediates the biosynthesis of pleosporalin A, ascomycone A, as well as a third cryptic naphthoquinone derived pigment, all responsible for the coloration of conidia. Essential for the production of pleosporalin A, but not the 2 other final products. The pathway begins with the biosynthesis of the cyclized heptaketide 3-acetonyl-1,6,8-trihydroxy-2-naphthaldehyde by the NR-PKS pgmA. The C-6 hydroxyl group is further methylated by the O-methyltransferase pgmB to yield fusarubinaldehyde which is in turn oxidized by the cytochrome P450 monooxygenase pgmC at C-9. The C-1 hydroxyl group is then methylated spontaneously. Although pgmE, pgmD and pgmH are essential for the production of pleosporalin A, it is not the case for the 2 other final products and it remains difficult to assign a specific function to each enzyme. PgmF and pgmG seem not to be involved in pigment biosynthesis although they were regulated by the cluster-specific transcription factor pgmR. This chain is FAD-linked oxidoreductase pgmH, found in Aspergillus terreus.